The following is a 397-amino-acid chain: CCA-adding enzyme (397 aa).

2 residues coordinate ATP: G26 and R29. Residues G26 and R29 each coordinate CTP. Mg(2+) contacts are provided by D39 and D41. 5 residues coordinate ATP: R110, D153, R156, R159, and R162. The CTP site is built by R110, D153, R156, R159, and R162.

Belongs to the tRNA nucleotidyltransferase/poly(A) polymerase family. Bacterial CCA-adding enzyme type 3 subfamily. Homodimer. Mg(2+) is required as a cofactor.

It carries out the reaction a tRNA precursor + 2 CTP + ATP = a tRNA with a 3' CCA end + 3 diphosphate. The catalysed reaction is a tRNA with a 3' CCA end + 2 CTP + ATP = a tRNA with a 3' CCACCA end + 3 diphosphate. In terms of biological role, catalyzes the addition and repair of the essential 3'-terminal CCA sequence in tRNAs without using a nucleic acid template. Adds these three nucleotides in the order of C, C, and A to the tRNA nucleotide-73, using CTP and ATP as substrates and producing inorganic pyrophosphate. tRNA 3'-terminal CCA addition is required both for tRNA processing and repair. Also involved in tRNA surveillance by mediating tandem CCA addition to generate a CCACCA at the 3' terminus of unstable tRNAs. While stable tRNAs receive only 3'-terminal CCA, unstable tRNAs are marked with CCACCA and rapidly degraded. The sequence is that of CCA-adding enzyme from Bacillus cereus (strain AH187).